Reading from the N-terminus, the 954-residue chain is Glycine dehydrogenase (decarboxylating) (954 aa).

Lys704 carries the N6-(pyridoxal phosphate)lysine modification.

This sequence belongs to the GcvP family. In terms of assembly, the glycine cleavage system is composed of four proteins: P, T, L and H. It depends on pyridoxal 5'-phosphate as a cofactor.

The enzyme catalyses N(6)-[(R)-lipoyl]-L-lysyl-[glycine-cleavage complex H protein] + glycine + H(+) = N(6)-[(R)-S(8)-aminomethyldihydrolipoyl]-L-lysyl-[glycine-cleavage complex H protein] + CO2. The glycine cleavage system catalyzes the degradation of glycine. The P protein binds the alpha-amino group of glycine through its pyridoxal phosphate cofactor; CO(2) is released and the remaining methylamine moiety is then transferred to the lipoamide cofactor of the H protein. This chain is Glycine dehydrogenase (decarboxylating), found in Rhizobium meliloti (strain 1021) (Ensifer meliloti).